The sequence spans 397 residues: Tryptophan synthase beta chain (397 aa).

N6-(pyridoxal phosphate)lysine is present on Lys87.

This sequence belongs to the TrpB family. As to quaternary structure, tetramer of two alpha and two beta chains. The cofactor is pyridoxal 5'-phosphate.

The catalysed reaction is (1S,2R)-1-C-(indol-3-yl)glycerol 3-phosphate + L-serine = D-glyceraldehyde 3-phosphate + L-tryptophan + H2O. Its pathway is amino-acid biosynthesis; L-tryptophan biosynthesis; L-tryptophan from chorismate: step 5/5. The beta subunit is responsible for the synthesis of L-tryptophan from indole and L-serine. This is Tryptophan synthase beta chain from Shigella boydii serotype 18 (strain CDC 3083-94 / BS512).